A 210-amino-acid polypeptide reads, in one-letter code: Glutathione S-transferase P (210 aa).

Residues 2–81 enclose the GST N-terminal domain; that stretch reads PPYTVVYFPV…HLGRTLGLYG (80 aa). At tyrosine 4 the chain carries Phosphotyrosine; by EGFR. Residues tyrosine 8, arginine 14, tryptophan 39, lysine 45, and 52-53 contribute to the glutathione site; that span reads QL. Threonine 62 is modified (phosphothreonine). 65 to 66 contacts glutathione; the sequence is QS. The region spanning 83 to 204 is the GST C-terminal domain; it reads DQREAALVDM…ASPEHVNLPI (122 aa). 2 positions are modified to N6-succinyllysine: lysine 103 and lysine 116. Lysine 128 carries the N6-acetyllysine modification.

Belongs to the GST superfamily. Pi family. Homodimer. Interacts with CDK5.

The protein resides in the cytoplasm. It localises to the mitochondrion. Its subcellular location is the nucleus. The enzyme catalyses RX + glutathione = an S-substituted glutathione + a halide anion + H(+). It catalyses the reaction prostaglandin J2 + glutathione = prostaglandin J2-S-(R)-glutathione. The catalysed reaction is prostaglandin J2 + glutathione = prostaglandin J2-S-(S)-glutathione. It carries out the reaction prostaglandin A2 + glutathione = prostaglandin A2-S-(S)-glutathione. The enzyme catalyses 11(S)-hydroxy-14(S),15(S)-epoxy-(5Z,8Z,12E)-eicosatrienoate + glutathione = (11S,15S)-dihydroxy-14(R)-S-glutathionyl-(5Z,8Z,12E)-eicosatrienoate. In terms of biological role, conjugation of reduced glutathione to a wide number of exogenous and endogenous hydrophobic electrophiles. Involved in the formation of glutathione conjugates of both prostaglandin A2 (PGA2) and prostaglandin J2 (PGJ2). Participates in the formation of novel hepoxilin regioisomers. Negatively regulates CDK5 activity via p25/p35 translocation to prevent neurodegeneration. This chain is Glutathione S-transferase P (GSTP1), found in Pongo abelii (Sumatran orangutan).